Here is a 130-residue protein sequence, read N- to C-terminus: Small ribosomal subunit protein uS9 (130 aa).

The tract at residues 98-130 (LKRAGMLTRDPRMKERKKPGLKGARRSPQFSKR) is disordered. Positions 111 to 130 (KERKKPGLKGARRSPQFSKR) are enriched in basic residues.

The protein belongs to the universal ribosomal protein uS9 family.

This is Small ribosomal subunit protein uS9 from Macrococcus caseolyticus (strain JCSC5402) (Macrococcoides caseolyticum).